The chain runs to 484 residues: Glutamate--tRNA ligase (484 aa).

The short motif at 12–22 (PSPTGEPHVGT) is the 'HIGH' region element. Positions 253–257 (KLSKR) match the 'KMSKS' region motif. Lys-256 lines the ATP pocket.

It belongs to the class-I aminoacyl-tRNA synthetase family. Glutamate--tRNA ligase type 1 subfamily. In terms of assembly, monomer.

It localises to the cytoplasm. It carries out the reaction tRNA(Glu) + L-glutamate + ATP = L-glutamyl-tRNA(Glu) + AMP + diphosphate. In terms of biological role, catalyzes the attachment of glutamate to tRNA(Glu) in a two-step reaction: glutamate is first activated by ATP to form Glu-AMP and then transferred to the acceptor end of tRNA(Glu). In Rhizobium etli (strain CIAT 652), this protein is Glutamate--tRNA ligase.